We begin with the raw amino-acid sequence, 138 residues long: Large ribosomal subunit protein uL14 (138 aa).

It belongs to the universal ribosomal protein uL14 family. As to quaternary structure, part of the 50S ribosomal subunit. Forms a cluster with proteins L3 and L24e, part of which may contact the 16S rRNA in 2 intersubunit bridges.

Binds to 23S rRNA. Forms part of two intersubunit bridges in the 70S ribosome. In Hyperthermus butylicus (strain DSM 5456 / JCM 9403 / PLM1-5), this protein is Large ribosomal subunit protein uL14.